An 83-amino-acid polypeptide reads, in one-letter code: uncharacterized protein (83 aa).

Belongs to the UPF0440 family.

This is an uncharacterized protein from Natronomonas pharaonis (strain ATCC 35678 / DSM 2160 / CIP 103997 / JCM 8858 / NBRC 14720 / NCIMB 2260 / Gabara) (Halobacterium pharaonis).